The sequence spans 94 residues: Integration host factor subunit beta (94 aa).

This sequence belongs to the bacterial histone-like protein family. As to quaternary structure, heterodimer of an alpha and a beta chain.

In terms of biological role, this protein is one of the two subunits of integration host factor, a specific DNA-binding protein that functions in genetic recombination as well as in transcriptional and translational control. The chain is Integration host factor subunit beta (ihfB) from Pasteurella multocida (strain Pm70).